A 362-amino-acid chain; its full sequence is Probable dual-specificity RNA methyltransferase RlmN (362 aa).

Glu-105 acts as the Proton acceptor in catalysis. Residues 111-344 (HEYGNSICVT…VTIRREQGHD (234 aa)) enclose the Radical SAM core domain. An intrachain disulfide couples Cys-118 to Cys-349. Residues Cys-125, Cys-129, and Cys-132 each coordinate [4Fe-4S] cluster. S-adenosyl-L-methionine-binding positions include 175–176 (GE), Ser-207, 230–232 (SLH), and Asn-306. Cys-349 serves as the catalytic S-methylcysteine intermediate.

Belongs to the radical SAM superfamily. RlmN family. [4Fe-4S] cluster serves as cofactor.

It localises to the cytoplasm. The enzyme catalyses adenosine(2503) in 23S rRNA + 2 reduced [2Fe-2S]-[ferredoxin] + 2 S-adenosyl-L-methionine = 2-methyladenosine(2503) in 23S rRNA + 5'-deoxyadenosine + L-methionine + 2 oxidized [2Fe-2S]-[ferredoxin] + S-adenosyl-L-homocysteine. It carries out the reaction adenosine(37) in tRNA + 2 reduced [2Fe-2S]-[ferredoxin] + 2 S-adenosyl-L-methionine = 2-methyladenosine(37) in tRNA + 5'-deoxyadenosine + L-methionine + 2 oxidized [2Fe-2S]-[ferredoxin] + S-adenosyl-L-homocysteine. Its function is as follows. Specifically methylates position 2 of adenine 2503 in 23S rRNA and position 2 of adenine 37 in tRNAs. This chain is Probable dual-specificity RNA methyltransferase RlmN, found in Bacillus cereus (strain G9842).